A 291-amino-acid chain; its full sequence is MEMO1 family protein PYRAB05390 (291 aa).

It belongs to the MEMO1 family.

This Pyrococcus abyssi (strain GE5 / Orsay) protein is MEMO1 family protein PYRAB05390.